A 491-amino-acid polypeptide reads, in one-letter code: Keratin, type II microfibrillar, component 7C (491 aa).

Cysteine 1 is subject to Blocked amino end (Cys). The head stretch occupies residues 1–109; it reads CGFSTVGSGF…PNAQCVKQEE (109 aa). One can recognise an IF rod domain in the interval 109 to 420; sequence EKEQIKCLNN…RLLEGEEQRL (312 aa). The segment at 110–144 is coil 1A; that stretch reads KEQIKCLNNRFAAFIDKVRFLEQQNKLLETKLQFF. Residues 145–154 are linker 1; that stretch reads QNRQCCESNL. The segment at 155–255 is coil 1B; it reads EPLFEGYIET…YQEEIRVLQA (101 aa). Positions 256-272 are linker 12; sequence NISDTSVIVKMDNSRDL. The tract at residues 273-416 is coil 2; the sequence is NMDCIVAEIK…ATYRRLLEGE (144 aa). A tail region spans residues 417 to 491; it reads EQRLCEGVGA…GGGSCSLGRC (75 aa).

The protein belongs to the intermediate filament family.

In terms of biological role, wool microfibrillar keratin. The chain is Keratin, type II microfibrillar, component 7C from Ovis aries (Sheep).